The following is a 263-amino-acid chain: uncharacterized protein (263 aa).

31–38 (GPTGSGKT) is an ATP binding site.

Belongs to the CbbQ/NirQ/NorQ/GpvN family.

This is an uncharacterized protein from Staphylococcus aureus (strain bovine RF122 / ET3-1).